A 159-amino-acid polypeptide reads, in one-letter code: Transcription antitermination protein NusB (159 aa).

Belongs to the NusB family.

Its function is as follows. Involved in transcription antitermination. Required for transcription of ribosomal RNA (rRNA) genes. Binds specifically to the boxA antiterminator sequence of the ribosomal RNA (rrn) operons. This Xanthomonas campestris pv. campestris (strain 8004) protein is Transcription antitermination protein NusB.